We begin with the raw amino-acid sequence, 79 residues long: UPF0291 protein BH2353 (79 aa).

Residues 57-79 (GAGNDVTPDKLKQSKNKYRNDIH) form a disordered region. The span at 63–79 (TPDKLKQSKNKYRNDIH) shows a compositional bias: basic and acidic residues.

It belongs to the UPF0291 family.

Its subcellular location is the cytoplasm. The protein is UPF0291 protein BH2353 of Halalkalibacterium halodurans (strain ATCC BAA-125 / DSM 18197 / FERM 7344 / JCM 9153 / C-125) (Bacillus halodurans).